The sequence spans 301 residues: MSSFGKVAVLFGGTSAEREVSLNSGSRVLAALQGQGIDAHAFDPAEQPLDALKGYDRAFIALHGRHGEDGTIQGALEVMHIPYTGSGVLASALAMDKFRTKLMWRAAGLAIPEYALLTADSDFADIEEELGLPLFVKPAREGSSIGVTKVKERGALKAAYEEAARHDPLVIAEKGVMGGEYTVGIIGDEAMPIIKIEPATEWYDYEAKYNRDDTRYLCPCGLPEAKEMEIRKGALEAFRILGGRGWGRVDFLMDEDGKYYFLEVNTAPGMTDHSLVPMAARVNGMDYPTLVRRVLELAAND.

The ATP-grasp domain maps to Lys101–Glu296. Glu127 to Thr182 contributes to the ATP binding site. Mg(2+) contacts are provided by Asp250, Glu263, and Asn265.

Belongs to the D-alanine--D-alanine ligase family. Requires Mg(2+) as cofactor. Mn(2+) serves as cofactor.

It is found in the cytoplasm. It catalyses the reaction 2 D-alanine + ATP = D-alanyl-D-alanine + ADP + phosphate + H(+). It functions in the pathway cell wall biogenesis; peptidoglycan biosynthesis. Functionally, cell wall formation. This Dechloromonas aromatica (strain RCB) protein is D-alanine--D-alanine ligase.